Reading from the N-terminus, the 125-residue chain is uncharacterized protein (125 aa).

Residues 1–33 (MLPHQNSSYTRQGTNDAQANDMRSPSQLPTSVN) show a composition bias toward polar residues. Disordered stretches follow at residues 1–35 (MLPHQNSSYTRQGTNDAQANDMRSPSQLPTSVNIE) and 44–63 (SEKLNTPMHNRSRSGIKKHT). Over residues 53 to 63 (NRSRSGIKKHT) the composition is skewed to basic residues.

This is an uncharacterized protein from Schizosaccharomyces pombe (strain 972 / ATCC 24843) (Fission yeast).